A 624-amino-acid polypeptide reads, in one-letter code: Basal cell adhesion molecule (624 aa).

Positions 1-25 (MEPPDARAGLLWLTLLLSGYSGAQA) are cleaved as a signal peptide. 2 Ig-like V-type domains span residues 26 to 136 (ELHV…SSVR) and 141 to 251 (PEAT…HTFR). At 26–543 (ELHVSVPPRV…GSVAPQTAQA (518 aa)) the chain is on the extracellular side. Disulfide bonds link cysteine 47–cysteine 119, cysteine 166–cysteine 231, and cysteine 285–cysteine 331. Ig-like C2-type domains follow at residues 268-343 (PSTT…EEVQ), 357-436 (PLEL…QSFQ), and 443-534 (PELK…FHFG). 3 N-linked (GlcNAc...) asparagine glycosylation sites follow: asparagine 315, asparagine 371, and asparagine 378. Cystine bridges form between cysteine 379-cysteine 419 and cysteine 468-cysteine 518. Residues 477–497 (KLTWSQRGDTTPAEPPFEGRG) are disordered. The chain crosses the membrane as a helical span at residues 544 to 564 (GVAVMAVAVSVGLLLLVVAAF). Residues 565–624 (YCMRRKGRPGCCQRAEKGAPPAREPELSHSGSERPEHTGLLMGGPSGGGRGGNGGFGDEC) lie on the Cytoplasmic side of the membrane. The tract at residues 574-624 (GCCQRAEKGAPPAREPELSHSGSERPEHTGLLMGGPSGGGRGGNGGFGDEC) is disordered. The segment covering 587-601 (REPELSHSGSERPEH) has biased composition (basic and acidic residues). Serine 592, serine 594, and serine 596 each carry phosphoserine. The span at 605 to 624 (LMGGPSGGGRGGNGGFGDEC) shows a compositional bias: gly residues.

As to quaternary structure, homodimer. Interacts with ITGA4:ITGB1. Interacts with spectrins SPTA1 and SPTB1.

Its subcellular location is the cell membrane. Functionally, transmembrane glycoprotein that functions as both a receptor and an adhesion molecule playing a crucial role in cell adhesion, motility, migration and invasion. Extracellular domain enables binding to extracellular matrix proteins, such as laminin, integrin and other ligands while its intracellular domain interacts with cytoskeletal proteins like hemoglobin, facilitating cell signal transduction. Serves as a receptor for laminin alpha-5/LAMA5 to promote cell adhesion. Mechanistically, JAK2 induces BCAM phosphorylation and activates its adhesion to laminin by stimulating a Rap1/AKT signaling pathway in the absence of EPOR. In Rattus norvegicus (Rat), this protein is Basal cell adhesion molecule (Bcam).